The sequence spans 255 residues: Hydroxyacylglutathione hydrolase (255 aa).

The Zn(2+) site is built by His-56, His-58, Asp-60, His-61, His-114, Asp-133, and His-171.

Belongs to the metallo-beta-lactamase superfamily. Glyoxalase II family. In terms of assembly, monomer. The cofactor is Zn(2+).

The enzyme catalyses an S-(2-hydroxyacyl)glutathione + H2O = a 2-hydroxy carboxylate + glutathione + H(+). It participates in secondary metabolite metabolism; methylglyoxal degradation; (R)-lactate from methylglyoxal: step 2/2. Its function is as follows. Thiolesterase that catalyzes the hydrolysis of S-D-lactoyl-glutathione to form glutathione and D-lactic acid. The sequence is that of Hydroxyacylglutathione hydrolase from Nitrobacter winogradskyi (strain ATCC 25391 / DSM 10237 / CIP 104748 / NCIMB 11846 / Nb-255).